The sequence spans 140 residues: uncharacterized protein (140 aa).

A glycan (N-linked (GlcNAc...) asparagine) is linked at asparagine 36. A helical membrane pass occupies residues 91–107 (LFMSLIGLCVCYMNLVF). Residues 113 to 122 (QPSSSGSKGN) are compositionally biased toward polar residues. Positions 113-140 (QPSSSGSKGNTETTIETTTEVETETAKQ) are disordered. Residues 131–140 (TEVETETAKQ) are compositionally biased toward acidic residues.

Its subcellular location is the endoplasmic reticulum membrane. This is an uncharacterized protein from Saccharomyces cerevisiae (strain ATCC 204508 / S288c) (Baker's yeast).